A 309-amino-acid chain; its full sequence is tRNA uridine(34) hydroxylase (309 aa).

The Rhodanese domain maps to 123-217; it reads DDPEVIVVDT…YLEEVPEEQT (95 aa). Cys-177 serves as the catalytic Cysteine persulfide intermediate.

The protein belongs to the TrhO family.

The enzyme catalyses uridine(34) in tRNA + AH2 + O2 = 5-hydroxyuridine(34) in tRNA + A + H2O. Catalyzes oxygen-dependent 5-hydroxyuridine (ho5U) modification at position 34 in tRNAs. The chain is tRNA uridine(34) hydroxylase from Saccharophagus degradans (strain 2-40 / ATCC 43961 / DSM 17024).